We begin with the raw amino-acid sequence, 966 residues long: SH3 domain-binding protein 4 (966 aa).

An SH3 1 domain is found at 57 to 116 (GAAREVVAIKDCCPSSFTTLKFSKGDRLYVLDSSGAEWWYAHNNTEMGYIPAAYVEPINY). Positions 322 to 457 (TNIVCRLDSS…LEPCMYVCVV (136 aa)) constitute a ZU5 domain. An SH3 2 domain is found at 657–727 (NNLKFGKLIK…HAKNVLVVGK (71 aa)).

In terms of assembly, homodimer or homooligomer.

The protein localises to the membrane. It is found in the clathrin-coated pit. It localises to the cytoplasmic vesicle. Its subcellular location is the clathrin-coated vesicle. The protein resides in the nucleus. In terms of biological role, possible role in regulating endocytosis of the transferrin receptor at the plasma membrane. Alternatively, may function as a negative regulator of the amino acid-induced TOR signaling by inhibiting the formation of active Rag GTPase complexes. Preferentially binds inactive Rag GTPase complexes and prevents their interaction with the mTORC1 complex inhibiting its relocalization to lysosomes and its activation. Thereby, may indirectly regulate cell growth, proliferation and autophagy. This Seriola quinqueradiata (Five-ray yellowtail) protein is SH3 domain-binding protein 4 (sh3bp4).